The following is a 187-amino-acid chain: Ribosome-recycling factor (187 aa).

It belongs to the RRF family.

It localises to the cytoplasm. Its function is as follows. Responsible for the release of ribosomes from messenger RNA at the termination of protein biosynthesis. May increase the efficiency of translation by recycling ribosomes from one round of translation to another. The polypeptide is Ribosome-recycling factor (Methylorubrum extorquens (strain CM4 / NCIMB 13688) (Methylobacterium extorquens)).